A 208-amino-acid polypeptide reads, in one-letter code: Large ribosomal subunit protein bL25 (208 aa).

This sequence belongs to the bacterial ribosomal protein bL25 family. CTC subfamily. In terms of assembly, part of the 50S ribosomal subunit; part of the 5S rRNA/L5/L18/L25 subcomplex. Contacts the 5S rRNA. Binds to the 5S rRNA independently of L5 and L18.

This is one of the proteins that binds to the 5S RNA in the ribosome where it forms part of the central protuberance. The chain is Large ribosomal subunit protein bL25 from Paracoccus denitrificans (strain Pd 1222).